We begin with the raw amino-acid sequence, 812 residues long: Axin-2 (812 aa).

The tract at residues 1 to 43 (MNRTLTDPMVSSFREDDPRPPVPGEEGETTCHHPSKLAMMRPK) is disordered. Residues 84–203 (SLHFLLGDQD…LTSDIYLEYV (120 aa)) form the RGS domain. Disordered regions lie at residues 275–326 (SYRR…AIPP), 388–430 (ETMS…TCEE), 446–484 (TPGC…SSMN), and 609–726 (RQTK…SGCH). A compositionally biased stretch (polar residues) spans 285–303 (NRFTSGYSFAPATSANDSE). A compositionally biased stretch (low complexity) spans 305–323 (SSDALTDDSMSMTDSSVDA). Residues 329 to 415 (LGSKKQLQRE…RDESEMSSSS (87 aa)) form an interaction with GSK3B region. A compositionally biased stretch (basic and acidic residues) spans 388 to 397 (ETMSSLEERL). The segment covering 401-410 (QEEEERDESE) has biased composition (acidic residues). Residues 411–421 (MSSSSASHSLP) are compositionally biased toward low complexity. An interaction with beta-catenin region spans residues 415–467 (SASHSLPLLPPGTCEEDPQAILDEHLSRVLKTPGCQSPGLLRHSPRSRSPEQR). The span at 475-484 (STRSQSSSMN) shows a compositional bias: polar residues. Positions 672–683 (EEARRRLEEVSK) are enriched in basic and acidic residues. The DIX domain maps to 730-812 (GSETVVTYFF…KILGKVDRMD (83 aa)).

As to quaternary structure, interacts with hwa; leading to promote the tankyrase-mediated degradation of axin1. ADP-ribosylated by tankyrase tnks and tnks2. Poly-ADP-ribosylated protein is recognized by rnf146, followed by ubiquitination and subsequent activation of the Wnt signaling pathway. In terms of processing, ubiquitinated by rnf146 when poly-ADP-ribosylated, leading to its degradation and subsequent activation of the Wnt signaling pathway.

The protein localises to the cytoplasm. Functionally, component of the beta-catenin destruction complex required for regulating ctnnb1 levels through phosphorylation and ubiquitination, and modulating Wnt-signaling. Controls dorsoventral patterning by down-regulating ctnnb1 to inhibit the Wnt signaling pathway and ventralize embryos. The chain is Axin-2 (axin2) from Danio rerio (Zebrafish).